The following is a 68-amino-acid chain: Non-specific lipid-transfer protein 2 (68 aa).

This sequence belongs to the plant LTP family.

In terms of biological role, plant non-specific lipid-transfer proteins transfer phospholipids as well as galactolipids across membranes. May play a role in wax or cutin deposition in the cell walls of expanding epidermal cells and certain secretory tissues. The protein is Non-specific lipid-transfer protein 2 of Prunus armeniaca (Apricot).